The primary structure comprises 759 residues: Short transient receptor potential channel 1 (759 aa).

Positions 1–30 (MMAALYPSTDLSGVSSSSLPSSPSSSSPNE) are disordered. The Cytoplasmic portion of the chain corresponds to 1–311 (MMAALYPSTD…FGQMSGYRRK (311 aa)). The segment covering 15–28 (SSSSLPSSPSSSSP) has biased composition (low complexity). ANK repeat units follow at residues 46 to 75 (LNEK…SGDL), 83 to 109 (LGRN…YGCQ), and 124 to 146 (MDVA…MLLK). The Zn(2+) site is built by H155, C159, C161, and C164. Positions 312-345 (PTCKKIMTVLTVGIFWPVLSLCYLIAPKSQFGRI) form an intramembrane region, discontinuously helical. The Cytoplasmic segment spans residues 346-352 (IHTPFMK). The helical transmembrane segment at 353–370 (FIIHGASYFTFLLLLNLY) threads the bilayer. Residues 371–388 (SLVYNEDKKNTMGPALER) lie on the Extracellular side of the membrane. The helical transmembrane segment at 389 to 405 (IDYLLILWIIGMIWSDI) threads the bilayer. Over 406–421 (KRLWYEGLEDFLEESR) the chain is Cytoplasmic. A helical transmembrane segment spans residues 422–441 (NQLSFVMNSLYLATFALKVV). The Extracellular segment spans residues 442 to 462 (AHNKFHDFADRKDWDAFHPTL). Residues 463–483 (VAEGLFAFANVLSYLRLFFMY) traverse the membrane as a helical segment. Residues 484-502 (TTSSILGPLQISMGQMLQD) lie on the Cytoplasmic side of the membrane. A helical transmembrane segment spans residues 503–524 (FGKFLGMFLLVLFSFTIGLTQL). Over 525 to 589 (YDKGYTSKEQ…GEELQSFVGA (65 aa)) the chain is Extracellular. A disulfide bridge connects residues C537 and C542. A helical transmembrane segment spans residues 590–610 (VIVGTYNVVVVIVLTKLLVAM). Residues 611-759 (LHKSFQLIAN…SKYAMFYPKN (149 aa)) lie on the Cytoplasmic side of the membrane.

This sequence belongs to the transient receptor (TC 1.A.4) family. STrpC subfamily. TRPC1 sub-subfamily. Heterotetramer with TRPC4 and/or TRPC5. Forms a heteromeric ion channel with TRPC4, with a 1:3 TRPC1:TRPC4 stoichiometry. Unlike other TRP channel proteins, does not form a homomeric channel. Interacts with TRPC4AP. Interacts with ITPR3. Interacts with MX1 and RNF24. Interacts with FKBP4. Interacts with PLSCR1. Interacts with PKD2L2. Forms a heterotetramer with PKD2 with a 2:2 stoichiometry; has distinct channel properties separate from PKD2 or TRPC1 homomers alone. Post-translationally, activation of PRKCA induces phosphorylation of TRPC1 and subsequent Ca2+ entry into cells. As to expression, expressed in brain, hippocampus, amygdala, Purkinje cells and single neurons in the cortex and striatum.

It localises to the cell membrane. It catalyses the reaction Ca(2+)(in) = Ca(2+)(out). It carries out the reaction Na(+)(in) = Na(+)(out). The catalysed reaction is Li(+)(in) = Li(+)(out). The enzyme catalyses Cs(+)(in) = Cs(+)(out). With respect to regulation, may be operated by a phosphatidylinositol second messenger system activated by receptor tyrosine kinases or G-protein coupled receptors. Also activated by intracellular calcium store depletion. In terms of biological role, forms a receptor-activated non-selective calcium permeant cation channel. Forms a heteromeric ion channel with TRPC4 or TRPC5 that has reduced calcium permeability compared to the homomeric TRPC4 or TRPC5 channel. Also permeable to monovalent ions including sodium, lithium and cesium ions. The sequence is that of Short transient receptor potential channel 1 (Trpc1) from Rattus norvegicus (Rat).